The primary structure comprises 234 residues: Protein XNDC1N (234 aa).

The chain is Protein XNDC1N from Homo sapiens (Human).